A 553-amino-acid chain; its full sequence is Glycerol-3-phosphate dehydrogenase (553 aa).

Residue 13 to 41 (DLIVIGGGINGVGTARDGALRGLKTLLIE) participates in FAD binding.

It belongs to the FAD-dependent glycerol-3-phosphate dehydrogenase family. FAD serves as cofactor.

It is found in the cytoplasm. The catalysed reaction is a quinone + sn-glycerol 3-phosphate = dihydroxyacetone phosphate + a quinol. This Synechocystis sp. (strain ATCC 27184 / PCC 6803 / Kazusa) protein is Glycerol-3-phosphate dehydrogenase (glpD).